We begin with the raw amino-acid sequence, 382 residues long: MKALHFGAGNIGRGFIGKLLADAGIQLTFADVNQVVLDALNARHSYQVHVVGETEQVDTVSGVDAVSSIGDDVVDLIAQVDLVTTAVGPVVLERIAPAIAKGLVKRKEQGNESPLNIIACENMVRGTTQLKGHVMNALPEDAKAWVEEHVGFVDSAVDRIVPPSASATNDPLEVTVETFSEWIVDKTQFKGTLPNIPGMELTDNLMAFVERKLFTLNTGHAITAYLGKLAGHQTIRDAILDEKIRAVVKGAMEESGAVLIKRYGFDADKHAAYIQKILGRFENPYLKDDVERVGRQPLRKLSAGDRLIKPLLGTLEYGLPHKNLIEGIAAAMHFRSEDDPQAQELAALIADKGPQAALAQISGLDANNEVVSEAVTAYKAMQ.

3–14 serves as a coordination point for NAD(+); that stretch reads ALHFGAGNIGRG. At Lys269 the chain carries N6-acetyllysine.

Belongs to the mannitol dehydrogenase family.

It catalyses the reaction D-mannitol 1-phosphate + NAD(+) = beta-D-fructose 6-phosphate + NADH + H(+). This chain is Mannitol-1-phosphate 5-dehydrogenase, found in Escherichia coli O127:H6 (strain E2348/69 / EPEC).